Here is a 301-residue protein sequence, read N- to C-terminus: Acetylglutamate kinase (301 aa).

Residues 68–69, Arg90, and Asn195 contribute to the substrate site; that span reads GG.

The protein belongs to the acetylglutamate kinase family. ArgB subfamily.

Its subcellular location is the cytoplasm. The enzyme catalyses N-acetyl-L-glutamate + ATP = N-acetyl-L-glutamyl 5-phosphate + ADP. The protein operates within amino-acid biosynthesis; L-arginine biosynthesis; N(2)-acetyl-L-ornithine from L-glutamate: step 2/4. Its function is as follows. Catalyzes the ATP-dependent phosphorylation of N-acetyl-L-glutamate. The polypeptide is Acetylglutamate kinase (Pseudomonas fluorescens (strain ATCC BAA-477 / NRRL B-23932 / Pf-5)).